We begin with the raw amino-acid sequence, 1148 residues long: MSRATSVGDQLEAPARIIYLNQSHLNKFCDNRISTAKYSVLTFLPRFLYEQIRRAANAFFLFIALLQQIPDVSPTGRYTTLVPLVIILTIAGIKEIIEDFKRHKADNAVNKKKTIVLRNGMWHTIMWKEVAVGDIVKVLNGQYLPADMVLFSSSEPQGMCYVETANLDGETNLKIRQGLSHTTDMQTRDVLMKLSGRIECEGPNRHLYDFTGNLHLDGKSSVALGPDQILLRGTQLRNTQWVFGVVVYTGHDSKLMQNSTKAPLKRSNVEKVTNVQILVLFGILLVMALVSSVGALFWNGSHGGKSWYIKKMDTNSDNFGYNLLTFIILYNNLIPISLLVTLEVVKYTQALFINWDMDMYYIENDTPAMARTSNLNEELGQVKYLFSDKTGTLTCNIMNFKKCSIAGVTYGHFPELAREQSSDDFCRMTSCTNDSCDFNDPRLLKNIEDQHPTAPCIQEFLTLLAVCHTVVPEKDGDEIIYQASSPDEAALVKGAKKLGFVFTGRTPYSVIIEAMGQEQTFGILNVLEFSSDRKRMSVIVRLPSGQLRLYCKGADNVIFERLSKDSKYMEETLCHLEYFATEGLRTLCVAYADLSENEYEEWLKVYQEASIILKDRAQRLEECYEIIEKNLLLLGATAIEDRLQAGVPETIATLLKAEIKIWVLTGDKQETAINIGYSCRLVSQNMALILLKEDSLDATRAAITQHCTDLGNLLGKENDVALIIDGHTLKYALSFEVRRSFLDLALSCKAVICCRVSPLQKSEIVDVVKKRVKAITLAIGDGANDVGMIQTAHVGVGISGNEGMQATNNSDYAIAQFSYLEKLLLVHGAWSYNRVTKCILYCFYKNVVLYIIELWFAFVNGFSGQILFERWCIGLYNVIFTALPPFTLGIFERSCTQESMLRFPQLYRITQNAEGFNTKVFWGHCINALVHSLILFWVPMKALEHDTPVTSGHATDYLFVGNIVYTYVVVTVCLKAGLETTAWTKFSHLAVWGSMLIWLVFFGVYSTIWPTIPIAPDMKGQATMVLSSAYFWLGLFLVPTACLIEDVAWRAAKHTCKKTLLEEVQELETKSRVMGKAMLRDSNGKRMNERDRLIKRLSRKTPPTLFRTGSIQQCVSHGYAFSQEEHGAVTQEEIVRAYDTTKENSRKK.

Over 1–44 (MSRATSVGDQLEAPARIIYLNQSHLNKFCDNRISTAKYSVLTFL) the chain is Cytoplasmic. T5 carries the phosphothreonine modification. A helical membrane pass occupies residues 45–66 (PRFLYEQIRRAANAFFLFIALL). The Exoplasmic loop portion of the chain corresponds to 67–71 (QQIPD). Residues 72–94 (VSPTGRYTTLVPLVIILTIAGIK) form a helical membrane-spanning segment. The Cytoplasmic portion of the chain corresponds to 95-276 (EIIEDFKRHK…SNVEKVTNVQ (182 aa)). Residues 277–298 (ILVLFGILLVMALVSSVGALFW) traverse the membrane as a helical segment. Over 299–323 (NGSHGGKSWYIKKMDTNSDNFGYNL) the chain is Exoplasmic loop. Residues 324–345 (LTFIILYNNLIPISLLVTLEVV) form a helical membrane-spanning segment. At 346–837 (KYTQALFINW…GAWSYNRVTK (492 aa)) the chain is on the cytoplasmic side. The 4-aspartylphosphate intermediate role is filled by D388. D388, K389, T390, E488, F529, K552, R585, T665, G666, D667, R755, and K761 together coordinate ATP. Residue D388 participates in Mg(2+) binding. T390 is a binding site for Mg(2+). Residue D781 participates in Mg(2+) binding. Positions 784 and 785 each coordinate ATP. Position 785 (D785) interacts with Mg(2+). The helical transmembrane segment at 838–858 (CILYCFYKNVVLYIIELWFAF) threads the bilayer. The Exoplasmic loop portion of the chain corresponds to 859-870 (VNGFSGQILFER). The helical transmembrane segment at 871–890 (WCIGLYNVIFTALPPFTLGI) threads the bilayer. Residues 891 to 920 (FERSCTQESMLRFPQLYRITQNAEGFNTKV) are Cytoplasmic-facing. A helical transmembrane segment spans residues 921–942 (FWGHCINALVHSLILFWVPMKA). Topologically, residues 943–956 (LEHDTPVTSGHATD) are exoplasmic loop. A helical membrane pass occupies residues 957–979 (YLFVGNIVYTYVVVTVCLKAGLE). The Cytoplasmic segment spans residues 980-985 (TTAWTK). A helical membrane pass occupies residues 986-1006 (FSHLAVWGSMLIWLVFFGVYS). At 1007–1024 (TIWPTIPIAPDMKGQATM) the chain is on the exoplasmic loop side. A helical transmembrane segment spans residues 1025–1049 (VLSSAYFWLGLFLVPTACLIEDVAW). Over 1050 to 1148 (RAAKHTCKKT…DTTKENSRKK (99 aa)) the chain is Cytoplasmic.

This sequence belongs to the cation transport ATPase (P-type) (TC 3.A.3) family. Type IV subfamily. As to quaternary structure, component of a P4-ATPase flippase complex which consists of a catalytic alpha subunit and an accessory beta subunit. Interacts with TMEM30A to form a flippase complex. Mg(2+) is required as a cofactor. In terms of tissue distribution, found in testis, heart and brain. Most abundant in testis. Also detected in fetal tissues. Expressed in retinal photoreceptor cells; detected in retina outer nuclear layer and inner segment (at protein level).

Its subcellular location is the membrane. It localises to the golgi apparatus membrane. The protein resides in the endosome membrane. It is found in the cell membrane. The protein localises to the photoreceptor outer segment membrane. Its subcellular location is the photoreceptor inner segment membrane. The enzyme catalyses ATP + H2O + phospholipidSide 1 = ADP + phosphate + phospholipidSide 2.. It carries out the reaction a 1,2-diacyl-sn-glycero-3-phospho-L-serine(out) + ATP + H2O = a 1,2-diacyl-sn-glycero-3-phospho-L-serine(in) + ADP + phosphate + H(+). It catalyses the reaction a 1,2-diacyl-sn-glycero-3-phosphoethanolamine(in) + ATP + H2O = a 1,2-diacyl-sn-glycero-3-phosphoethanolamine(out) + ADP + phosphate + H(+). Its function is as follows. Catalytic component of a P4-ATPase flippase complex which catalyzes the hydrolysis of ATP coupled to the transport of aminophospholipids from the outer to the inner leaflet of various membranes and ensures the maintenance of asymmetric distribution of phospholipids. Able to translocate phosphatidylserine, but not phosphatidylcholine. Phospholipid translocation also seems to be implicated in vesicle formation and in uptake of lipid signaling molecules. Reconstituted to liposomes, the ATP8A2:TMEM30A flippase complex predominantly transports phosphatidylserine (PS) and to a lesser extent phosphatidylethanolamine (PE). Phospholipid translocation is not associated with a countertransport of an inorganic ion or other charged substrate from the cytoplasmic side toward the exoplasm in connection with the phosphorylation from ATP. ATP8A2:TMEM30A may be involved in regulation of neurite outgrowth. Proposed to function in the generation and maintenance of phospholipid asymmetry in photoreceptor disk membranes and neuronal axon membranes. May be involved in vesicle trafficking in neuronal cells. Required for normal visual and auditory function; involved in photoreceptor and inner ear spiral ganglion cell survival. In Mus musculus (Mouse), this protein is Phospholipid-transporting ATPase IB.